The chain runs to 205 residues: Pyridoxal 5'-phosphate synthase subunit PdxT (205 aa).

52–54 is an L-glutamine binding site; that stretch reads GES. The active-site Nucleophile is Cys-84. L-glutamine contacts are provided by residues Arg-116 and 145–146; that span reads IR. Residues His-185 and Glu-187 each act as charge relay system in the active site.

Belongs to the glutaminase PdxT/SNO family. In the presence of PdxS, forms a dodecamer of heterodimers. Only shows activity in the heterodimer.

The catalysed reaction is aldehydo-D-ribose 5-phosphate + D-glyceraldehyde 3-phosphate + L-glutamine = pyridoxal 5'-phosphate + L-glutamate + phosphate + 3 H2O + H(+). The enzyme catalyses L-glutamine + H2O = L-glutamate + NH4(+). It functions in the pathway cofactor biosynthesis; pyridoxal 5'-phosphate biosynthesis. In terms of biological role, catalyzes the hydrolysis of glutamine to glutamate and ammonia as part of the biosynthesis of pyridoxal 5'-phosphate. The resulting ammonia molecule is channeled to the active site of PdxS. This Staphylothermus marinus (strain ATCC 43588 / DSM 3639 / JCM 9404 / F1) protein is Pyridoxal 5'-phosphate synthase subunit PdxT.